The chain runs to 119 residues: Large ribosomal subunit protein uL18 (119 aa).

It belongs to the universal ribosomal protein uL18 family. As to quaternary structure, part of the 50S ribosomal subunit; part of the 5S rRNA/L5/L18/L25 subcomplex. Contacts the 5S and 23S rRNAs.

Functionally, this is one of the proteins that bind and probably mediate the attachment of the 5S RNA into the large ribosomal subunit, where it forms part of the central protuberance. This Xanthomonas axonopodis pv. citri (strain 306) protein is Large ribosomal subunit protein uL18.